We begin with the raw amino-acid sequence, 364 residues long: Chorismate synthase (364 aa).

R47 is an NADP(+) binding site. Residues 124–126 (RGS), 240–241 (NA), G284, 299–303 (KPTPS), and R326 each bind FMN.

Belongs to the chorismate synthase family. The cofactor is FMNH2.

The catalysed reaction is 5-O-(1-carboxyvinyl)-3-phosphoshikimate = chorismate + phosphate. Its pathway is metabolic intermediate biosynthesis; chorismate biosynthesis; chorismate from D-erythrose 4-phosphate and phosphoenolpyruvate: step 7/7. Catalyzes the anti-1,4-elimination of the C-3 phosphate and the C-6 proR hydrogen from 5-enolpyruvylshikimate-3-phosphate (EPSP) to yield chorismate, which is the branch point compound that serves as the starting substrate for the three terminal pathways of aromatic amino acid biosynthesis. This reaction introduces a second double bond into the aromatic ring system. In Methanobrevibacter smithii (strain ATCC 35061 / DSM 861 / OCM 144 / PS), this protein is Chorismate synthase.